Here is a 750-residue protein sequence, read N- to C-terminus: 1,4-alpha-glucan branching enzyme GlgB (750 aa).

Asp-425 functions as the Nucleophile in the catalytic mechanism. The active-site Proton donor is Glu-478.

It belongs to the glycosyl hydrolase 13 family. GlgB subfamily. As to quaternary structure, monomer.

The enzyme catalyses Transfers a segment of a (1-&gt;4)-alpha-D-glucan chain to a primary hydroxy group in a similar glucan chain.. The protein operates within glycan biosynthesis; glycogen biosynthesis. Functionally, catalyzes the formation of the alpha-1,6-glucosidic linkages in glycogen by scission of a 1,4-alpha-linked oligosaccharide from growing alpha-1,4-glucan chains and the subsequent attachment of the oligosaccharide to the alpha-1,6 position. This chain is 1,4-alpha-glucan branching enzyme GlgB, found in Cupriavidus pinatubonensis (strain JMP 134 / LMG 1197) (Cupriavidus necator (strain JMP 134)).